The sequence spans 957 residues: Glycine dehydrogenase (decarboxylating) (957 aa).

Lysine 708 is subject to N6-(pyridoxal phosphate)lysine.

Belongs to the GcvP family. In terms of assembly, the glycine cleavage system is composed of four proteins: P, T, L and H. Requires pyridoxal 5'-phosphate as cofactor.

It carries out the reaction N(6)-[(R)-lipoyl]-L-lysyl-[glycine-cleavage complex H protein] + glycine + H(+) = N(6)-[(R)-S(8)-aminomethyldihydrolipoyl]-L-lysyl-[glycine-cleavage complex H protein] + CO2. Functionally, the glycine cleavage system catalyzes the degradation of glycine. The P protein binds the alpha-amino group of glycine through its pyridoxal phosphate cofactor; CO(2) is released and the remaining methylamine moiety is then transferred to the lipoamide cofactor of the H protein. This Escherichia coli O81 (strain ED1a) protein is Glycine dehydrogenase (decarboxylating).